Reading from the N-terminus, the 501-residue chain is MTSYFPWLTIIVVLPIFAASSIFFLPHKGNKVFRWYTTCICLTELLLTTYVFCYHFQLDDQLIQLEEDLKCINIFDFHWRLGIDGLSIGPILLTGFITTLATLAAWPVTRNSRLFYLLMLVMYSGQIGLFSSRDLLLFFIMWELELIPVYLLLSMWGGKKRLYSATKFILYTAGGSVFLLIGVLGMGLYGSNEPTLDFERLANQSYPVALEIIFYFGFLIAYAVKSPIIPLHTWLPDTHGEAHYSTCMLLAGILLKMGAYGLIRINMELLPHAHSLFSPWLVIVGTIQIIYAASTSFGQRNLKKRIACSSVSHMGFIIIGIGSITDTGLNGAILQILSHGFIGAALFFLSGTSCDRIRFVYLDEMGGISLPMPKIFTMFSSFSMASLALPGMSGFVAELVVFLGIITSPKYLLMPKILITFVMAIGMILTPIYLLSMSRQMFYGYKLFNVPNSFFVDSGPRELFVSICIFLPVIGIGIYPDCVFSLSVDKIEGILSNYFHR.

A run of 14 helical transmembrane segments spans residues 5–25, 38–58, 88–108, 114–131, 135–155, 168–188, 209–229, 243–263, 273–293, 306–326, 331–351, 387–407, 417–437, and 464–484; these read FPWLTIIVVLPIFAASSIFFL, TCICLTELLLTTYVFCYHFQL, IGPILLTGFITTLATLAAWPV, LFYLLMLVMYSGQIGLFS, LLLFFIMWELELIPVYLLLSM, FILYTAGGSVFLLIGVLGMGL, ALEIIFYFGFLIAYAVKSPII, HYSTCMLLAGILLKMGAYGLI, AHSLFSPWLVIVGTIQIIYAA, IACSSVSHMGFIIIGIGSITD, GAILQILSHGFIGAALFFLSG, LALPGMSGFVAELVVFLGIIT, ILITFVMAIGMILTPIYLLSM, and FVSICIFLPVIGIGIYPDCVF.

The protein belongs to the complex I subunit 4 family.

It is found in the plastid. It localises to the chloroplast thylakoid membrane. The catalysed reaction is a plastoquinone + NADH + (n+1) H(+)(in) = a plastoquinol + NAD(+) + n H(+)(out). It catalyses the reaction a plastoquinone + NADPH + (n+1) H(+)(in) = a plastoquinol + NADP(+) + n H(+)(out). In Dioscorea elephantipes (Elephant's foot yam), this protein is NAD(P)H-quinone oxidoreductase chain 4, chloroplastic.